The chain runs to 443 residues: ATP-dependent protease ATPase subunit HslU (443 aa).

Residues I19 and 61 to 66 (GVGKTE) each bind ATP. Residues 139-158 (PPRDIGFSQPEEKDSNTRQV) are disordered. D256, E321, and R393 together coordinate ATP.

This sequence belongs to the ClpX chaperone family. HslU subfamily. As to quaternary structure, a double ring-shaped homohexamer of HslV is capped on each side by a ring-shaped HslU homohexamer. The assembly of the HslU/HslV complex is dependent on binding of ATP.

The protein resides in the cytoplasm. Functionally, ATPase subunit of a proteasome-like degradation complex; this subunit has chaperone activity. The binding of ATP and its subsequent hydrolysis by HslU are essential for unfolding of protein substrates subsequently hydrolyzed by HslV. HslU recognizes the N-terminal part of its protein substrates and unfolds these before they are guided to HslV for hydrolysis. The protein is ATP-dependent protease ATPase subunit HslU of Cupriavidus taiwanensis (strain DSM 17343 / BCRC 17206 / CCUG 44338 / CIP 107171 / LMG 19424 / R1) (Ralstonia taiwanensis (strain LMG 19424)).